Here is a 331-residue protein sequence, read N- to C-terminus: Ketol-acid reductoisomerase (NADP(+)) (331 aa).

Residues A2–T182 enclose the KARI N-terminal Rossmann domain. Residues Y25–Q28, S51, S53, and D83–Q86 each bind NADP(+). H108 is a catalytic residue. G134 contributes to the NADP(+) binding site. The KARI C-terminal knotted domain maps to N183–L328. D191, E195, E227, and E231 together coordinate Mg(2+). Residue S252 participates in substrate binding.

It belongs to the ketol-acid reductoisomerase family. Mg(2+) is required as a cofactor.

The enzyme catalyses (2R)-2,3-dihydroxy-3-methylbutanoate + NADP(+) = (2S)-2-acetolactate + NADPH + H(+). It catalyses the reaction (2R,3R)-2,3-dihydroxy-3-methylpentanoate + NADP(+) = (S)-2-ethyl-2-hydroxy-3-oxobutanoate + NADPH + H(+). Its pathway is amino-acid biosynthesis; L-isoleucine biosynthesis; L-isoleucine from 2-oxobutanoate: step 2/4. It functions in the pathway amino-acid biosynthesis; L-valine biosynthesis; L-valine from pyruvate: step 2/4. Functionally, involved in the biosynthesis of branched-chain amino acids (BCAA). Catalyzes an alkyl-migration followed by a ketol-acid reduction of (S)-2-acetolactate (S2AL) to yield (R)-2,3-dihydroxy-isovalerate. In the isomerase reaction, S2AL is rearranged via a Mg-dependent methyl migration to produce 3-hydroxy-3-methyl-2-ketobutyrate (HMKB). In the reductase reaction, this 2-ketoacid undergoes a metal-dependent reduction by NADPH to yield (R)-2,3-dihydroxy-isovalerate. This Synechococcus sp. (strain WH7803) protein is Ketol-acid reductoisomerase (NADP(+)).